Here is a 536-residue protein sequence, read N- to C-terminus: G-protein coupled receptor Mth2 (536 aa).

5 disulfides stabilise this stretch: cysteine 17–cysteine 71, cysteine 73–cysteine 78, cysteine 82–cysteine 177, cysteine 83–cysteine 96, and cysteine 138–cysteine 197. Residues asparagine 24 and asparagine 33 are each glycosylated (N-linked (GlcNAc...) asparagine). N-linked (GlcNAc...) asparagine glycosylation is found at asparagine 103, asparagine 113, asparagine 118, asparagine 159, and asparagine 184. A helical transmembrane segment spans residues 212–232 (YAMMFSIPFMMLTIAVYLLIP). Residues 233 to 241 (ELRNQHGKS) lie on the Cytoplasmic side of the membrane. The chain crosses the membrane as a helical span at residues 242–262 (LVCYLIGLTVGYSSLCYVQLY). Topologically, residues 263–273 (QVDATGVTCKV) are extracellular. The chain crosses the membrane as a helical span at residues 274–294 (FGYTAYFFFMGAYMWLSVISF). The Cytoplasmic portion of the chain corresponds to 295–314 (DLWHNFRGTRGINRFQEKKR). The helical transmembrane segment at 315–335 (FLFYSLYSWGIALVFLAFTYC) threads the bilayer. At 336–365 (AQQLSNLPDNLKPGIGDGVYCWLDMSNWAA) the chain is on the extracellular side. A helical membrane pass occupies residues 366 to 386 (MIYFYGPILAIVVANTIMFIM). At 387-417 (TAIKIHGVQREMARIIASENSTKNLRTEKDK) the chain is on the cytoplasmic side. A helical membrane pass occupies residues 418–438 (FGLFLRLFLIMGITWLTELIS). The Extracellular segment spans residues 439 to 449 (YFVGSDKGWSK). The chain crosses the membrane as a helical span at residues 450-470 (LFYISDLANAMQGFLIFMLFV). At 471–536 (MKKKVKHLIT…VDPQKTTIFR (66 aa)) the chain is on the cytoplasmic side. Positions 487–506 (RDGSNQRQSQYSTKTTSSSV) are disordered. The span at 492 to 505 (QRQSQYSTKTTSSS) shows a compositional bias: low complexity.

Belongs to the G-protein coupled receptor 2 family. Mth subfamily. As to quaternary structure, homodimer.

It localises to the cell membrane. Its function is as follows. Involved in biological aging and stress response. Essential for adult survival. In Drosophila simulans (Fruit fly), this protein is G-protein coupled receptor Mth2 (mth2).